A 113-amino-acid polypeptide reads, in one-letter code: Ribosome-binding factor A (113 aa).

It belongs to the RbfA family. Monomer. Binds 30S ribosomal subunits, but not 50S ribosomal subunits or 70S ribosomes.

Its subcellular location is the cytoplasm. In terms of biological role, one of several proteins that assist in the late maturation steps of the functional core of the 30S ribosomal subunit. Associates with free 30S ribosomal subunits (but not with 30S subunits that are part of 70S ribosomes or polysomes). Required for efficient processing of 16S rRNA. May interact with the 5'-terminal helix region of 16S rRNA. The sequence is that of Ribosome-binding factor A from Oceanobacillus iheyensis (strain DSM 14371 / CIP 107618 / JCM 11309 / KCTC 3954 / HTE831).